We begin with the raw amino-acid sequence, 631 residues long: 1-deoxy-D-xylulose-5-phosphate synthase (631 aa).

Residues His-73, 113–115, Asn-174, Tyr-285, and Glu-367 contribute to the thiamine diphosphate site; that span reads SHA. Mg(2+) is bound at residue Asn-174.

It belongs to the transketolase family. DXPS subfamily. Homodimer. Requires Mg(2+) as cofactor. Thiamine diphosphate serves as cofactor.

The catalysed reaction is D-glyceraldehyde 3-phosphate + pyruvate + H(+) = 1-deoxy-D-xylulose 5-phosphate + CO2. The protein operates within metabolic intermediate biosynthesis; 1-deoxy-D-xylulose 5-phosphate biosynthesis; 1-deoxy-D-xylulose 5-phosphate from D-glyceraldehyde 3-phosphate and pyruvate: step 1/1. Its function is as follows. Catalyzes the acyloin condensation reaction between C atoms 2 and 3 of pyruvate and glyceraldehyde 3-phosphate to yield 1-deoxy-D-xylulose-5-phosphate (DXP). The protein is 1-deoxy-D-xylulose-5-phosphate synthase of Streptomyces sp. (strain CL190).